Reading from the N-terminus, the 548-residue chain is Beta-caryophyllene synthase (548 aa).

(2E,6E)-farnesyl diphosphate is bound by residues Arg-268, Asp-305, Asp-309, Arg-446, and Asp-449. Positions 305 and 309 each coordinate Mg(2+). The DDXXD motif motif lies at 305-309 (DDIYD). Asp-449 and Glu-457 together coordinate Mg(2+).

Belongs to the terpene synthase family. Mg(2+) serves as cofactor.

The enzyme catalyses (2E,6E)-farnesyl diphosphate = (-)-(E)-beta-caryophyllene + diphosphate. Its pathway is secondary metabolite biosynthesis; terpenoid biosynthesis. Functionally, sesquiterpene synthase that catalyzes the formation of sesquiterpenes and sesquiterpenoid alcohols. Converts farnesyl diphosphate (FPP) to beta-caryophyllene. Can use geranyl diphosphate (GPP) to produce myrcene, limonene and camphene. The protein is Beta-caryophyllene synthase of Lavandula angustifolia (Lavender).